Here is a 123-residue protein sequence, read N- to C-terminus: Immunoglobulin lambda variable 9-49 (123 aa).

Residues 1–19 (MAWAPLLLTLLSLLTGSLS) form the signal peptide. The segment at 20–44 (QPVLTQPPSASASLGASVTLTCTLS) is framework-1. Positions 21–123 (PVLTQPPSAS…ADHGSGSNFV (103 aa)) constitute an Ig-like domain. A disulfide bridge links cysteine 41 with cysteine 112. A complementarity-determining-1 region spans residues 45–51 (SGYSNYK). The interval 52-68 (VDWYQQRPGKGPRFVMR) is framework-2. A complementarity-determining-2 region spans residues 69 to 76 (VGTGGIVG). The interval 77 to 112 (SKGDGIPDRFSVLGSGLNRYLTIKNIQEEDESDYHC) is framework-3. Residue tyrosine 96 is modified to Phosphotyrosine. Threonine 98 carries the phosphothreonine modification. The tract at residues 113 to 123 (GADHGSGSNFV) is complementarity-determining-3.

As to quaternary structure, immunoglobulins are composed of two identical heavy chains and two identical light chains; disulfide-linked.

It localises to the secreted. It is found in the cell membrane. Functionally, v region of the variable domain of immunoglobulin light chains that participates in the antigen recognition. Immunoglobulins, also known as antibodies, are membrane-bound or secreted glycoproteins produced by B lymphocytes. In the recognition phase of humoral immunity, the membrane-bound immunoglobulins serve as receptors which, upon binding of a specific antigen, trigger the clonal expansion and differentiation of B lymphocytes into immunoglobulins-secreting plasma cells. Secreted immunoglobulins mediate the effector phase of humoral immunity, which results in the elimination of bound antigens. The antigen binding site is formed by the variable domain of one heavy chain, together with that of its associated light chain. Thus, each immunoglobulin has two antigen binding sites with remarkable affinity for a particular antigen. The variable domains are assembled by a process called V-(D)-J rearrangement and can then be subjected to somatic hypermutations which, after exposure to antigen and selection, allow affinity maturation for a particular antigen. This Homo sapiens (Human) protein is Immunoglobulin lambda variable 9-49.